A 257-amino-acid chain; its full sequence is Imidazole glycerol phosphate synthase subunit HisF (257 aa).

Catalysis depends on residues aspartate 11 and aspartate 130.

Belongs to the HisA/HisF family. In terms of assembly, heterodimer of HisH and HisF.

It is found in the cytoplasm. It carries out the reaction 5-[(5-phospho-1-deoxy-D-ribulos-1-ylimino)methylamino]-1-(5-phospho-beta-D-ribosyl)imidazole-4-carboxamide + L-glutamine = D-erythro-1-(imidazol-4-yl)glycerol 3-phosphate + 5-amino-1-(5-phospho-beta-D-ribosyl)imidazole-4-carboxamide + L-glutamate + H(+). It functions in the pathway amino-acid biosynthesis; L-histidine biosynthesis; L-histidine from 5-phospho-alpha-D-ribose 1-diphosphate: step 5/9. IGPS catalyzes the conversion of PRFAR and glutamine to IGP, AICAR and glutamate. The HisF subunit catalyzes the cyclization activity that produces IGP and AICAR from PRFAR using the ammonia provided by the HisH subunit. The sequence is that of Imidazole glycerol phosphate synthase subunit HisF from Bradyrhizobium diazoefficiens (strain JCM 10833 / BCRC 13528 / IAM 13628 / NBRC 14792 / USDA 110).